The sequence spans 658 residues: Endoplasmic reticulum mannosyl-oligosaccharide 1,2-alpha-mannosidase (658 aa).

At 1–50 (MYPPPAPPPAPHRDFISVTLSLGESYDNSKSRRRRSCWRKWKQLSRLQRN) the chain is on the cytoplasmic side. The chain crosses the membrane as a helical; Signal-anchor for type II membrane protein span at residues 51 to 71 (VILFVLGFLILCGFLYSLHTA). Residues 72 to 658 (DQWKALSGRP…AHPLPIWAPA (587 aa)) lie on the Lumenal side of the membrane. Phosphoserine is present on S102. The tract at residues 123–142 (GPPHLQIRPPNTVSKDGMQD) is disordered. Catalysis depends on E289, which acts as the Proton donor. The active site involves D422. An intrachain disulfide couples C486 to C515. E529 (proton donor) is an active-site residue. The active site involves E558. A Ca(2+)-binding site is contributed by T647.

The protein belongs to the glycosyl hydrolase 47 family. The cofactor is Ca(2+).

It localises to the endoplasmic reticulum membrane. The enzyme catalyses N(4)-(alpha-D-Man-(1-&gt;2)-alpha-D-Man-(1-&gt;2)-alpha-D-Man-(1-&gt;3)-[alpha-D-Man-(1-&gt;2)-alpha-D-Man-(1-&gt;3)-[alpha-D-Man-(1-&gt;2)-alpha-D-Man-(1-&gt;6)]-alpha-D-Man-(1-&gt;6)]-beta-D-Man-(1-&gt;4)-beta-D-GlcNAc-(1-&gt;4)-beta-D-GlcNAc)-L-asparaginyl-[protein] (N-glucan mannose isomer 9A1,2,3B1,2,3) + 4 H2O = N(4)-(alpha-D-Man-(1-&gt;3)-[alpha-D-Man-(1-&gt;3)-[alpha-D-Man-(1-&gt;6)]-alpha-D-Man-(1-&gt;6)]-beta-D-Man-(1-&gt;4)-beta-D-GlcNAc-(1-&gt;4)-beta-D-GlcNAc)-L-asparaginyl-[protein] (N-glucan mannose isomer 5A1,2) + 4 beta-D-mannose. It catalyses the reaction N(4)-(alpha-D-Man-(1-&gt;2)-alpha-D-Man-(1-&gt;2)-alpha-D-Man-(1-&gt;3)-[alpha-D-Man-(1-&gt;3)-[alpha-D-Man-(1-&gt;2)-alpha-D-Man-(1-&gt;6)]-alpha-D-Man-(1-&gt;6)]-beta-D-Man-(1-&gt;4)-beta-D-GlcNAc-(1-&gt;4)-beta-D-GlcNAc)-L-asparaginyl-[protein] (N-glucan mannose isomer 8A1,2,3B1,3) + 3 H2O = N(4)-(alpha-D-Man-(1-&gt;3)-[alpha-D-Man-(1-&gt;3)-[alpha-D-Man-(1-&gt;6)]-alpha-D-Man-(1-&gt;6)]-beta-D-Man-(1-&gt;4)-beta-D-GlcNAc-(1-&gt;4)-beta-D-GlcNAc)-L-asparaginyl-[protein] (N-glucan mannose isomer 5A1,2) + 3 beta-D-mannose. It functions in the pathway protein modification; protein glycosylation. Functionally, involved in glycoprotein quality control targeting of misfolded glycoproteins for degradation. It primarily trims a single alpha-1,2-linked mannose residue from Man(9)GlcNAc(2) to produce Man(8)GlcNAc(2), but at high enzyme concentrations, as found in the ER quality control compartment (ERQC), it further trims the carbohydrates to Man(5-6)GlcNAc(2). The protein is Endoplasmic reticulum mannosyl-oligosaccharide 1,2-alpha-mannosidase (Man1b1) of Mus musculus (Mouse).